The chain runs to 394 residues: Flap endonuclease 1 (394 aa).

The tract at residues 1 to 104 is N-domain; that stretch reads MGIKQLFSII…GELAKRFQRK (104 aa). Asp34 lines the Mg(2+) pocket. Positions 47 and 70 each coordinate DNA. Mg(2+) is bound by residues Asp86, Glu158, Glu160, Asp179, and Asp181. The I-domain stretch occupies residues 122–253; that stretch reads DVEKFSRRTV…STALKLIREH (132 aa). Position 158 (Glu158) interacts with DNA. Residues Gly231 and Asp233 each contribute to the DNA site. Residue Asp233 participates in Mg(2+) binding. The interaction with PCNA stretch occupies residues 341-349; sequence QQARIEGFF. Residues 356–383 are compositionally biased toward basic and acidic residues; sequence EEEKKAHKRKLEEQAEQKRKKVKEEKKE. The disordered stretch occupies residues 356 to 394; the sequence is EEEKKAHKRKLEEQAEQKRKKVKEEKKEKAKLKAKPRGA. Positions 384–394 are enriched in basic residues; it reads KAKLKAKPRGA.

It belongs to the XPG/RAD2 endonuclease family. FEN1 subfamily. In terms of assembly, interacts with PCNA. Three molecules of FEN1 bind to one PCNA trimer with each molecule binding to one PCNA monomer. PCNA stimulates the nuclease activity without altering cleavage specificity. Mg(2+) serves as cofactor. In terms of processing, phosphorylated. Phosphorylation upon DNA damage induces relocalization to the nuclear plasma.

It is found in the nucleus. The protein resides in the nucleolus. The protein localises to the nucleoplasm. Its subcellular location is the mitochondrion. Structure-specific nuclease with 5'-flap endonuclease and 5'-3' exonuclease activities involved in DNA replication and repair. During DNA replication, cleaves the 5'-overhanging flap structure that is generated by displacement synthesis when DNA polymerase encounters the 5'-end of a downstream Okazaki fragment. It enters the flap from the 5'-end and then tracks to cleave the flap base, leaving a nick for ligation. Also involved in the long patch base excision repair (LP-BER) pathway, by cleaving within the apurinic/apyrimidinic (AP) site-terminated flap. Acts as a genome stabilization factor that prevents flaps from equilibrating into structures that lead to duplications and deletions. Also possesses 5'-3' exonuclease activity on nicked or gapped double-stranded DNA, and exhibits RNase H activity. Also involved in replication and repair of rDNA and in repairing mitochondrial DNA. This chain is Flap endonuclease 1, found in Sordaria macrospora (strain ATCC MYA-333 / DSM 997 / K(L3346) / K-hell).